The following is a 500-amino-acid chain: MVLWGLLGALLMVMVGWLCLPGLLRQRRPQEPPLDKGSIPWLGHAMTFRKNMLEFLKHMRSKHGDVFTVQLGGQYFTFVMDPVSFGPILKDGQRKLDFVEYAKGLVLKVFGYQSIEGDHRMIHLASTKHLMGHGLEELNKAMLDSLSLVMLGPEGRSPDASRWHEDGLFHFCYGVMFKAGYLSLFGHTSDKRQDLLQAEEIFIKFRRFDLLFPRFVYSLLGPREWREVGRLQQLFHELLSVKHNPEKDGMSNWIGHMLQYLSEQGVAPAMQDKFNFMMLWASQGNTGPASFWALIYLLKHPEAMRAVKEEATRVLGEPRLEAKQSFTVQLSALQHIPVLDSVMEETLRLGAAPTLYRVVQKDILLKMASGQECLLRQGDIVTLFPYLSVHMDPDIHPEPTTFKYDRFLNPNGSRKVDFYKAGQKIHHYTMPWGSGVSICPGRFFALSEMKLFVLLMVQYFDLELVDPNTPVPPIDPRRWGFGTMQPTHDVRIRYRLKPLE.

Residues 2–21 (VLWGLLGALLMVMVGWLCLP) traverse the membrane as a helical segment. Serine 325 bears the Phosphoserine mark. Cysteine 439 provides a ligand contact to heme.

This sequence belongs to the cytochrome P450 family. Heme is required as a cofactor. As to expression, liver (at protein level).

The protein resides in the endoplasmic reticulum membrane. The protein localises to the microsome membrane. The enzyme catalyses 7alpha-hydroxycholest-4-en-3-one + reduced [NADPH--hemoprotein reductase] + O2 = 7alpha,12alpha-dihydroxycholest-4-en-3-one + oxidized [NADPH--hemoprotein reductase] + H2O + H(+). It carries out the reaction 5beta-cholestane-3alpha,7alpha-diol + reduced [NADPH--hemoprotein reductase] + O2 = 5beta-cholestane-3alpha,7alpha,12alpha-triol + oxidized [NADPH--hemoprotein reductase] + H2O + H(+). It catalyses the reaction chenodeoxycholate + reduced [NADPH--hemoprotein reductase] + O2 = cholate + oxidized [NADPH--hemoprotein reductase] + H2O + H(+). It functions in the pathway lipid metabolism; bile acid biosynthesis. With respect to regulation, up-regulated upon treatment with streptozotocin. In terms of biological role, a cytochrome P450 monooxygenase involved in primary bile acid biosynthesis. Catalyzes the 12alpha-hydroxylation of 7alpha-hydroxy-4-cholesten-3-one, an intermediate metabolite in cholic acid biosynthesis. Controls biliary balance of cholic acid and chenodeoxycholic acid, ultimately regulating the intestinal absorption of dietary lipids. Mechanistically, uses molecular oxygen inserting one oxygen atom into a substrate, and reducing the second into a water molecule, with two electrons provided by NADPH via cytochrome P450 reductase (CPR; NADPH--hemoprotein reductase). In Oryctolagus cuniculus (Rabbit), this protein is 7-alpha-hydroxycholest-4-en-3-one 12-alpha-hydroxylase (CYP8B1).